The primary structure comprises 181 residues: Putative adenylate kinase (181 aa).

Residues G10, G12, K13, S14, and T15 each coordinate ATP. The NMP stretch occupies residues 35 to 58; that stretch reads NITEVVSKNGLYLEKDIEMDSYVV. The segment at 106 to 116 is LID; it reads SRNYSSEKVKE. R107 and K147 together coordinate ATP.

The protein belongs to the adenylate kinase family. AK6 subfamily. As to quaternary structure, interacts with uS11. Not a structural component of 40S pre-ribosomes, but transiently interacts with them by binding to uS11.

It carries out the reaction AMP + ATP = 2 ADP. The enzyme catalyses ATP + H2O = ADP + phosphate + H(+). Functionally, broad-specificity nucleoside monophosphate (NMP) kinase that catalyzes the reversible transfer of the terminal phosphate group between nucleoside triphosphates and monophosphates. Also has ATPase activity. Involved in the late maturation steps of the 30S ribosomal particles, specifically 16S rRNA maturation. While NMP activity is not required for ribosome maturation, ATPase activity is. Associates transiently with small ribosomal subunit protein uS11. ATP hydrolysis breaks the interaction with uS11. May temporarily remove uS11 from the ribosome to enable a conformational change of the ribosomal RNA that is needed for the final maturation step of the small ribosomal subunit. The polypeptide is Putative adenylate kinase (Methanococcus maripaludis (strain C7 / ATCC BAA-1331)).